The chain runs to 156 residues: ATP synthase subunit b (156 aa).

Residues 7–27 form a helical membrane-spanning segment; the sequence is IFFQMLVFFVLGWFTMKFVWP.

The protein belongs to the ATPase B chain family. As to quaternary structure, F-type ATPases have 2 components, F(1) - the catalytic core - and F(0) - the membrane proton channel. F(1) has five subunits: alpha(3), beta(3), gamma(1), delta(1), epsilon(1). F(0) has three main subunits: a(1), b(2) and c(10-14). The alpha and beta chains form an alternating ring which encloses part of the gamma chain. F(1) is attached to F(0) by a central stalk formed by the gamma and epsilon chains, while a peripheral stalk is formed by the delta and b chains.

Its subcellular location is the cell inner membrane. F(1)F(0) ATP synthase produces ATP from ADP in the presence of a proton or sodium gradient. F-type ATPases consist of two structural domains, F(1) containing the extramembraneous catalytic core and F(0) containing the membrane proton channel, linked together by a central stalk and a peripheral stalk. During catalysis, ATP synthesis in the catalytic domain of F(1) is coupled via a rotary mechanism of the central stalk subunits to proton translocation. In terms of biological role, component of the F(0) channel, it forms part of the peripheral stalk, linking F(1) to F(0). The polypeptide is ATP synthase subunit b (Bordetella bronchiseptica (strain ATCC BAA-588 / NCTC 13252 / RB50) (Alcaligenes bronchisepticus)).